A 396-amino-acid chain; its full sequence is Elongation factor Tu (396 aa).

The 197-residue stretch at 10-206 (KPHVNIGTIG…AVDESVPEPV (197 aa)) folds into the tr-type G domain. The interval 19–26 (GHVDHGKT) is G1. 19-26 (GHVDHGKT) contacts GTP. Thr-26 provides a ligand contact to Mg(2+). A G2 region spans residues 62–66 (GITIN). The interval 83 to 86 (DAPG) is G3. GTP-binding positions include 83–87 (DAPGH) and 138–141 (NKSD). Positions 138-141 (NKSD) are G4. The segment at 176 to 178 (SGL) is G5.

Belongs to the TRAFAC class translation factor GTPase superfamily. Classic translation factor GTPase family. EF-Tu/EF-1A subfamily. In terms of assembly, monomer.

Its subcellular location is the cytoplasm. It catalyses the reaction GTP + H2O = GDP + phosphate + H(+). Its function is as follows. GTP hydrolase that promotes the GTP-dependent binding of aminoacyl-tRNA to the A-site of ribosomes during protein biosynthesis. This Beutenbergia cavernae (strain ATCC BAA-8 / DSM 12333 / CCUG 43141 / JCM 11478 / NBRC 16432 / NCIMB 13614 / HKI 0122) protein is Elongation factor Tu.